Reading from the N-terminus, the 393-residue chain is Protein TsgA (393 aa).

Helical transmembrane passes span 11–31 (WISFLSYALTGALVIVTGMVM), 51–71 (FLNAGILISIFLNAWLMEIVP), 78–98 (FGFLLMVLAVAGLMFSHSLAL), 101–121 (AAMFILGVVSGITMSIGTFLV), 134–154 (LLFTDSFFSMAGMIFPMIAAF), 162–182 (WYWVYACIGLVYVAIFILTFG), 206–226 (IGVLFLSVAALCYILGQLGFI), 245–265 (TLVSNFWMSYMVGMWAFSFIL), 273–293 (ILTVLAGLAAILMYVFNTGTP), 297–317 (AWSILALGFFSSAIYTTIITL), 332–352 (FVLTCGTIGTMLTFVVTGPIV), and 361–381 (LLTANGLYAVVFVMCFLLGFV).

The protein belongs to the major facilitator superfamily. TsgA family.

The protein localises to the cell inner membrane. This Escherichia coli O139:H28 (strain E24377A / ETEC) protein is Protein TsgA.